We begin with the raw amino-acid sequence, 135 residues long: Sex-regulated protein janus-A (135 aa).

Lysine 37 is a binding site for substrate. Residue histidine 63 is the Proton acceptor of the active site. Residue 104–106 coordinates substrate; sequence SQG.

The protein belongs to the janus family.

Its function is as follows. JanA and janB regulate somatic sex differentiation. The chain is Sex-regulated protein janus-A (janA) from Drosophila yakuba (Fruit fly).